Consider the following 143-residue polypeptide: Cytochrome c-type biogenesis protein CcmE (143 aa).

Residues 1 to 8 (MTPVRRRK) are Cytoplasmic-facing. The chain crosses the membrane as a helical; Signal-anchor for type II membrane protein span at residues 9-29 (LFILLFALSVLSAAAALVLYA). The Periplasmic portion of the chain corresponds to 30 to 143 (LRQNISLFYT…KSALADKVKQ (114 aa)). Residues His-124 and Tyr-128 each coordinate heme.

Belongs to the CcmE/CycJ family.

The protein resides in the cell inner membrane. Heme chaperone required for the biogenesis of c-type cytochromes. Transiently binds heme delivered by CcmC and transfers the heme to apo-cytochromes in a process facilitated by CcmF and CcmH. In Legionella pneumophila (strain Lens), this protein is Cytochrome c-type biogenesis protein CcmE.